The following is a 274-amino-acid chain: Large ribosomal subunit protein uL2cz/uL2cy (274 aa).

Residues 1–15 (MAINLYKTSTPSTRN) are compositionally biased toward polar residues. Disordered stretches follow at residues 1–22 (MAIN…DSQV) and 225–274 (PVDH…RRSK).

This sequence belongs to the universal ribosomal protein uL2 family. As to quaternary structure, part of the 50S ribosomal subunit.

Its subcellular location is the plastid. It localises to the chloroplast. This chain is Large ribosomal subunit protein uL2cz/uL2cy (rpl2-A), found in Lobularia maritima (Sweet alyssum).